Reading from the N-terminus, the 882-residue chain is Translation initiation factor IF-2 (882 aa).

Residues 50–299 (SFKSANTTKP…KERPLPETLV (250 aa)) form a disordered region. 2 stretches are compositionally biased toward basic and acidic residues: residues 60 to 71 (STEKDSKNSSRK) and 84 to 96 (RRRD…DNRH). The span at 97–108 (GNNKRRNNKFKK) shows a compositional bias: basic residues. Basic and acidic residues-rich tracts occupy residues 109–133 (QQND…DLLN), 169–183 (KKVE…EKLE), 232–242 (QKEETKPTRKK), and 250–263 (EVPD…EHSD). Positions 264–277 (KARRRRNKKNKRIN) are enriched in basic residues. Positions 278–294 (QSKEIKKQPTQRKERPL) are enriched in basic and acidic residues. In terms of domain architecture, tr-type G spans 383 to 552 (KRPPVVTIMG…LLQADVMELK (170 aa)). A G1 region spans residues 392-399 (GHVDHGKT). 392-399 (GHVDHGKT) contributes to the GTP binding site. The segment at 417–421 (GITQK) is G2. Residues 438–441 (DTPG) are G3. GTP is bound by residues 438–442 (DTPGH) and 492–495 (NKID). The interval 492-495 (NKID) is G4. The segment at 528–530 (SAK) is G5.

Belongs to the TRAFAC class translation factor GTPase superfamily. Classic translation factor GTPase family. IF-2 subfamily.

The protein localises to the cytoplasm. In terms of biological role, one of the essential components for the initiation of protein synthesis. Protects formylmethionyl-tRNA from spontaneous hydrolysis and promotes its binding to the 30S ribosomal subunits. Also involved in the hydrolysis of GTP during the formation of the 70S ribosomal complex. The chain is Translation initiation factor IF-2 from Lactobacillus gasseri (strain ATCC 33323 / DSM 20243 / BCRC 14619 / CIP 102991 / JCM 1131 / KCTC 3163 / NCIMB 11718 / NCTC 13722 / AM63).